The following is a 225-amino-acid chain: Phosphatidylserine decarboxylase proenzyme (225 aa).

The active-site Schiff-base intermediate with substrate; via pyruvic acid is Ser-195. Ser-195 is subject to Pyruvic acid (Ser); by autocatalysis.

Belongs to the phosphatidylserine decarboxylase family. PSD-A subfamily. As to quaternary structure, heterodimer of a large membrane-associated beta subunit and a small pyruvoyl-containing alpha subunit. It depends on pyruvate as a cofactor. Post-translationally, is synthesized initially as an inactive proenzyme. Formation of the active enzyme involves a self-maturation process in which the active site pyruvoyl group is generated from an internal serine residue via an autocatalytic post-translational modification. Two non-identical subunits are generated from the proenzyme in this reaction, and the pyruvate is formed at the N-terminus of the alpha chain, which is derived from the carboxyl end of the proenzyme. The post-translation cleavage follows an unusual pathway, termed non-hydrolytic serinolysis, in which the side chain hydroxyl group of the serine supplies its oxygen atom to form the C-terminus of the beta chain, while the remainder of the serine residue undergoes an oxidative deamination to produce ammonia and the pyruvoyl prosthetic group on the alpha chain.

The protein resides in the cell membrane. It catalyses the reaction a 1,2-diacyl-sn-glycero-3-phospho-L-serine + H(+) = a 1,2-diacyl-sn-glycero-3-phosphoethanolamine + CO2. It participates in phospholipid metabolism; phosphatidylethanolamine biosynthesis; phosphatidylethanolamine from CDP-diacylglycerol: step 2/2. Its function is as follows. Catalyzes the formation of phosphatidylethanolamine (PtdEtn) from phosphatidylserine (PtdSer). The protein is Phosphatidylserine decarboxylase proenzyme of Gluconacetobacter diazotrophicus (strain ATCC 49037 / DSM 5601 / CCUG 37298 / CIP 103539 / LMG 7603 / PAl5).